We begin with the raw amino-acid sequence, 521 residues long: Probable protein kinase UbiB (521 aa).

The Protein kinase domain maps to 119 to 497; it reads QFDETPIASA…QKRTNRLLQT (379 aa). Residues 125-133 and Lys151 contribute to the ATP site; that span reads IASASIAQV. Catalysis depends on Asp286, which acts as the Proton acceptor. A helical membrane pass occupies residues 496-516; it reads QTIIYGGIGFVLGLLAMQLLV.

It belongs to the ABC1 family. UbiB subfamily.

The protein localises to the cell inner membrane. The protein operates within cofactor biosynthesis; ubiquinone biosynthesis [regulation]. In terms of biological role, is probably a protein kinase regulator of UbiI activity which is involved in aerobic coenzyme Q (ubiquinone) biosynthesis. This Variovorax paradoxus (strain S110) protein is Probable protein kinase UbiB.